Reading from the N-terminus, the 263-residue chain is MASNMLQLSLPPLSSSSSSLPFLSSSVYVLPFTHQRRHFSFFNVQNYRFRLSRSTSLGPLFVNKEEDSATYAVTEEEEDNDDDDPDPQSLEYVSQIKRVLELLKRNRDMLFGEVKLTIMIEDPRDVERRRLLGIDDENAPTRDDLAAALEEINEGKVPKDFAALQMLAEEMNSWPNLEVEATKQNKPGRSLYAKATDTGIDPKEAAKRLKIDWDSAAEIDESAESDEPDVPPALGYGALYLVSAFPIIIGISVVLILFYNSLQ.

The transit peptide at 1 to 71 (MASNMLQLSL…VNKEEDSATY (71 aa)) directs the protein to the chloroplast. Residues 238 to 258 (ALYLVSAFPIIIGISVVLILF) form a helical membrane-spanning segment.

Belongs to the Y3IP1/CEST family. Interacts with Ycf3.

The protein localises to the plastid. The protein resides in the chloroplast thylakoid membrane. Its function is as follows. Nuclear genome-encoded factor that participates in photosystem I (PSI) biogenesis. Cooperates with the plastid genome-encoded protein PSI assembly Ycf3 in the assembly of stable PSI units in the thylakoid membrane. The chain is Ycf3-interacting protein 1, chloroplastic from Nicotiana tabacum (Common tobacco).